Here is a 431-residue protein sequence, read N- to C-terminus: Probable prephenate dehydrogenase [NADP(+)] (431 aa).

5 to 34 (FQVGIIGFGDMGRLYAEYISKAGWRVNVCD) is a binding site for NADP(+). The region spanning 5–285 (FQVGIIGFGD…GENMDRNSSG (281 aa)) is the Prephenate/arogenate dehydrogenase domain.

The protein belongs to the prephenate/arogenate dehydrogenase family.

It is found in the cytoplasm. It catalyses the reaction prephenate + NADP(+) = 3-(4-hydroxyphenyl)pyruvate + CO2 + NADPH. It participates in amino-acid biosynthesis; L-tyrosine biosynthesis; (4-hydroxyphenyl)pyruvate from prephenate (NADP(+) route): step 1/1. In Schizosaccharomyces pombe (strain 972 / ATCC 24843) (Fission yeast), this protein is Probable prephenate dehydrogenase [NADP(+)] (tyr1).